A 487-amino-acid polypeptide reads, in one-letter code: Sugar transporter ERD6-like 6 (487 aa).

Serine 2 bears the N-acetylserine mark. 12 helical membrane passes run 46-66 (ISVLACVLIVALGPIQFGFTC), 89-109 (VFGSLSNVGAMVGAIASGQIA), 115-135 (KGSLMIAAIPNIIGWLCISFA), 146-166 (LLEGFGVGIISYTVPVYIAEI), 178-198 (VNQLSVTIGIMLAYLLGLFVP), 201-221 (ILAVLGILPCTLLIPGLFFIP), 284-304 (LMVGIGLLVLQQLGGINGVLF), 320-340 (AATFGVGAIQVVATAISTWLV), 347-367 (LLLTISSVGMTISLVIVAAAF), 389-409 (VGVVAMVVFFSLGMGPIPWLI), 425-445 (IATLANWFFSWLITMTANLLL), and 451-471 (GTFTLYGLVCAFTVVFVTLWV).

The protein belongs to the major facilitator superfamily. Sugar transporter (TC 2.A.1.1) family.

Its subcellular location is the membrane. Functionally, sugar transporter. In Arabidopsis thaliana (Mouse-ear cress), this protein is Sugar transporter ERD6-like 6.